A 64-amino-acid polypeptide reads, in one-letter code: Bactridin-2 (64 aa).

The LCN-type CS-alpha/beta domain occupies 1-63; sequence KDGYLVGNDG…TWNRATNRCG (63 aa). 4 cysteine pairs are disulfide-bonded: Cys-11-Cys-62, Cys-15-Cys-37, Cys-23-Cys-43, and Cys-27-Cys-45.

This sequence belongs to the long (4 C-C) scorpion toxin superfamily. Sodium channel inhibitor family. Beta subfamily. In terms of tissue distribution, expressed by the venom gland.

The protein resides in the secreted. Its function is as follows. Shows antibacterial activity against both Gram-positive bacteria (B.subtilis, M.luteus, E.faecalis) and Gram-negative bacteria (P.aeruginosa, Y.enterocolitica, A.calcoaceticus). Modifies membrane sodium permeability on Y.enterocolitica. Is toxic to mice, but is not to crabs. Induces concentration dependent haemolysis in human erythrocytes. Acts by inhibiting the sodium (Nav) currents. The sequence is that of Bactridin-2 from Tityus discrepans (Venezuelan scorpion).